The primary structure comprises 336 residues: Large ribosomal subunit protein uL10 (336 aa).

Residues 292–336 are disordered; sequence LKEKLSSRAAAPAPEEKEEEVEEEAEEEEEEEEEDAAAGLGALFG. The segment covering 307–327 has biased composition (acidic residues); that stretch reads EKEEEVEEEAEEEEEEEEEDA.

Belongs to the universal ribosomal protein uL10 family. Part of the 50S ribosomal subunit. Forms part of the ribosomal stalk which helps the ribosome interact with GTP-bound translation factors. Forms a heptameric L10(L12)2(L12)2(L12)2 complex, where L10 forms an elongated spine to which the L12 dimers bind in a sequential fashion.

Its function is as follows. Forms part of the ribosomal stalk, playing a central role in the interaction of the ribosome with GTP-bound translation factors. This chain is Large ribosomal subunit protein uL10, found in Methanothermobacter thermautotrophicus (strain ATCC 29096 / DSM 1053 / JCM 10044 / NBRC 100330 / Delta H) (Methanobacterium thermoautotrophicum).